Reading from the N-terminus, the 104-residue chain is Large ribosomal subunit protein uL24 (104 aa).

Belongs to the universal ribosomal protein uL24 family. Part of the 50S ribosomal subunit.

Its function is as follows. One of two assembly initiator proteins, it binds directly to the 5'-end of the 23S rRNA, where it nucleates assembly of the 50S subunit. One of the proteins that surrounds the polypeptide exit tunnel on the outside of the subunit. The protein is Large ribosomal subunit protein uL24 of Clostridium botulinum (strain Eklund 17B / Type B).